A 249-amino-acid polypeptide reads, in one-letter code: ATP synthase subunit a (249 aa).

6 helical membrane-spanning segments follow: residues 26 to 46 (FTNV…FLYL), 84 to 104 (FFPF…IGLF), 114 to 134 (IIVT…YGFF), 143 to 163 (LFVP…IEII), 185 to 205 (ITLK…ALGI), and 208 to 228 (AVLP…VAFL).

The protein belongs to the ATPase A chain family. As to quaternary structure, F-type ATPases have 2 components, CF(1) - the catalytic core - and CF(0) - the membrane proton channel. CF(1) has five subunits: alpha(3), beta(3), gamma(1), delta(1), epsilon(1). CF(0) has three main subunits: a(1), b(2) and c(9-12). The alpha and beta chains form an alternating ring which encloses part of the gamma chain. CF(1) is attached to CF(0) by a central stalk formed by the gamma and epsilon chains, while a peripheral stalk is formed by the delta and b chains.

Its subcellular location is the cell inner membrane. Key component of the proton channel; it plays a direct role in the translocation of protons across the membrane. The chain is ATP synthase subunit a from Brucella canis (strain ATCC 23365 / NCTC 10854 / RM-666).